The following is a 255-amino-acid chain: Dehydrogenase/reductase SDR family member 11 (255 aa).

A signal peptide spans 1-23 (MERWTGRVALVTGASVGIGAAVA). Residues 13-18 (GASVGI), 38-39 (RS), glutamate 44, 65-66 (DL), and asparagine 92 each bind NADP(+). 2 residues coordinate substrate: serine 146 and tyrosine 161. NADP(+) contacts are provided by residues tyrosine 161, lysine 165, 196–199 (VETG), and lysine 203. The Proton acceptor role is filled by tyrosine 161.

The protein belongs to the short-chain dehydrogenases/reductases (SDR) family.

The protein resides in the secreted. The enzyme catalyses a 3beta-hydroxysteroid + NADP(+) = a 3-oxosteroid + NADPH + H(+). The catalysed reaction is 17beta-estradiol + NAD(+) = estrone + NADH + H(+). It carries out the reaction 17beta-estradiol + NADP(+) = estrone + NADPH + H(+). It participates in steroid biosynthesis; estrogen biosynthesis. Its activity is regulated as follows. Inhibited by flavonoids including apigenin, luteolin, genistein, kaempferol and quercetin and also by carbenoxolone, zearalenone, glycyrrhetinic, curcumin and flufenamic acid. Its function is as follows. Catalyzes the conversion of the 17-keto group of estrone, 4- and 5-androstenes and 5-alpha-androstanes into their 17-beta-hydroxyl metabolites and the conversion of the 3-keto group of 3-, 3,17- and 3,20- diketosteroids into their 3-hydroxyl metabolites. Exhibits reductive 3-beta-hydroxysteroid dehydrogenase activity toward 5-beta-androstanes, 5-beta-pregnanes, 4-pregnenes and bile acids. May also reduce endogenous and exogenous alpha-dicarbonyl compounds and xenobiotic alicyclic ketones. This is Dehydrogenase/reductase SDR family member 11 (DHRS11) from Gallus gallus (Chicken).